The following is a 193-amino-acid chain: Cytidylate kinase (193 aa).

An ATP-binding site is contributed by 12–20 (GLPGSGTTT).

This sequence belongs to the cytidylate kinase family. Type 2 subfamily.

It is found in the cytoplasm. It carries out the reaction CMP + ATP = CDP + ADP. It catalyses the reaction dCMP + ATP = dCDP + ADP. This Methanopyrus kandleri (strain AV19 / DSM 6324 / JCM 9639 / NBRC 100938) protein is Cytidylate kinase.